The chain runs to 349 residues: Twinfilin-2 (349 aa).

A2 is subject to N-acetylalanine. ADF-H domains are found at residues 4–139 (QTGI…KHLS) and 177–313 (GLAF…DEVH). K14 carries the N6-acetyllysine modification. Y309 bears the Phosphotyrosine mark. The disordered stretch occupies residues 322–349 (AFAKPKGPGGKRGHKRLIRGPGENGDDS). Residues 330 to 339 (GGKRGHKRLI) show a composition bias toward basic residues. A Phosphoserine modification is found at S349.

Belongs to the actin-binding proteins ADF family. Twinfilin subfamily. As to quaternary structure, interacts with G-actin; ADP-actin form and capping protein (CP). May also be able to interact with TWF1 and phosphoinositides, PI(4,5)P2. When bound to PI(4,5)P2, it is down-regulated. Interacts with MYO7A. In vitro, phosphorylated by PRKCZ, CK2 and SRC. Ubiquitously expressed (at protein level).

The protein localises to the cytoplasm. The protein resides in the cytoskeleton. It localises to the perinuclear region. It is found in the cell projection. Its subcellular location is the stereocilium. In terms of biological role, actin-binding protein involved in motile and morphological processes. Inhibits actin polymerization, likely by sequestering G-actin. By capping the barbed ends of filaments, it also regulates motility. Seems to play an important role in clathrin-mediated endocytosis and distribution of endocytic organelles. May play a role in regulating the mature length of the middle and short rows of stereocilia. In Homo sapiens (Human), this protein is Twinfilin-2 (TWF2).